We begin with the raw amino-acid sequence, 272 residues long: MSGRGEPTMKTIIVGIDGSHAAITAALWGVDEAISRAVPLRLVSVIKPTHPSPDDYDRDLAHAERSLREAQSAVEAAGKLVKIETDIPRGPAGPVLVEASRDAEMICVGSVGIGRYASSILGSTATELAEKAHCPVAVMRSKVDQPASDINWIVVRMTDAPDNEAVLEYAAREAKLRQAPILALGGRPEELREIPDGEFERRVQDWHHRHPDVRVYPITTHTGIARFLADHDERVQLAVIGGGEAGQLARLVGPSGHPVFRHAECSVLVVRR.

ATP is bound by residues glycine 15, 109–115, and 123–124; these read GSVGIGR and ST.

Belongs to the universal stress protein A family.

The chain is Universal stress protein MT2699 from Mycobacterium tuberculosis (strain CDC 1551 / Oshkosh).